A 186-amino-acid polypeptide reads, in one-letter code: Chromosome-anchoring protein RacA (186 aa).

A DNA-binding region (H-T-H motif) is located at residues 3-23 (TADAANELGVSTKTVQRWVKQ). Residues 90-170 (ERLEERLQRF…NRREKDTAVR (81 aa)) adopt a coiled-coil conformation. The tract at residues 158–186 (ESMNRREKDTAVRREEKKPKSKLKSIFSF) is disordered. Residues 160 to 175 (MNRREKDTAVRREEKK) show a composition bias toward basic and acidic residues.

The protein belongs to the RacA family.

The protein localises to the cytoplasm. Its function is as follows. Required for the formation of axial filaments and for anchoring the origin regions at the cell poles in sporulating cells, thus ensuring proper chromosome segregation in the prespore. Binds in a dispersed manner throughout the chromosome but preferentially to sites clustered in the origin portion of the chromosome, causing condensation of the chromosome and its remodeling into an elongated, anchored structure. The polypeptide is Chromosome-anchoring protein RacA (Bacillus licheniformis (strain ATCC 14580 / DSM 13 / JCM 2505 / CCUG 7422 / NBRC 12200 / NCIMB 9375 / NCTC 10341 / NRRL NRS-1264 / Gibson 46)).